The following is a 395-amino-acid chain: MIVTPKFRGFICTTSHPVGCEYSVMNQVEYIKNQKKINGAKKVLVIGASTGYGLASRITAAFGCGAATIGIFFERPGSKNKTASAGWYNSAAFEKMAKEEGLYAKSINGDAFSNEIKQKTIDLIKKDLGKVDMVVYSLASPRRTHPVTGEVFNSVIKPIREAYTSKTVDFHTQLVSETTIEPASDDEIRQTIAVMGGEDWSMWMDALKKADVLEDNVMTLAYSYVGPEVTHSVYREGTIGKAKDDLEATAIKINENLRTIGGKAYVSINKAVVTQASAAIPVISLYVSALFKVMKEKNIHEGCIEQMYRMFNDRLYSGDLKLDSKGRICMDDLEMRPEVQNEVTKLWNEANNDNVKDITDIEGYRREFFRLFGFEFEDVDYNADVDIEVNIEGLY.

Residues 47–52 (GASTGY), 73–74 (FE), 110–111 (DA), and 138–139 (LA) contribute to the NAD(+) site. Position 224 (Tyr-224) interacts with substrate. The Proton donor role is filled by Tyr-234. NAD(+) contacts are provided by residues Lys-243 and 272–274 (VVT).

It belongs to the TER reductase family. Monomer.

It carries out the reaction a 2,3-saturated acyl-CoA + NAD(+) = a (2E)-enoyl-CoA + NADH + H(+). It participates in lipid metabolism; fatty acid biosynthesis. Involved in the fatty acid synthesis (FAS II). Catalyzes the reduction of a carbon-carbon double bond in an enoyl moiety that is covalently linked to a coenzyme A (CoA). This chain is Trans-2-enoyl-CoA reductase [NADH], found in Ruminiclostridium cellulolyticum (strain ATCC 35319 / DSM 5812 / JCM 6584 / H10) (Clostridium cellulolyticum).